We begin with the raw amino-acid sequence, 310 residues long: Ribosomal RNA small subunit methyltransferase H (310 aa).

Residues 33–35 (AGH), D53, F79, D100, and Q107 contribute to the S-adenosyl-L-methionine site.

The protein belongs to the methyltransferase superfamily. RsmH family.

It is found in the cytoplasm. It catalyses the reaction cytidine(1402) in 16S rRNA + S-adenosyl-L-methionine = N(4)-methylcytidine(1402) in 16S rRNA + S-adenosyl-L-homocysteine + H(+). In terms of biological role, specifically methylates the N4 position of cytidine in position 1402 (C1402) of 16S rRNA. The sequence is that of Ribosomal RNA small subunit methyltransferase H from Clostridium botulinum (strain Alaska E43 / Type E3).